We begin with the raw amino-acid sequence, 482 residues long: MEEWVEKYRPKSLNDVAGHNKTKESLIEWIESFINGQKQKPILLAGPPGSGKTTLAYAIAKDYAFDVIELNASDKRNKDVISQVVGTAATSKSLTGKRTLIVLDEVDGLSGNDDRGGVAEIIKVLKTAENPVILTANDVYKPALMTLRNSVNLINVGSVHTNSIPPVLRKIALKEGFEIDEKVIKTIASHAGGDLRAAINDLQSLATGGSIEVEDAKELPDRDSEKSIFDAMRIIMKTTHYDIATSATRDVKEELGTIEEWISENLPKEYLKYKDLANGYDYLSKSDVFLGRVFRRQYFGLWRYASALMTAGTALAKEEKYRGFTRYAPPAIFTKLSRTKGSRQRMKDILKKIALKTHTSTKRARNTLDYMVVVFESNEAVSAELVEYYELTKEEIEFLTNKTIAKNIFSVIAGKKPKVEKETPKKKKKAEDVVPIIPKRPKISEPPKEPLKEVIEETVEKTDKKEKEKKDPKKQATLDSFF.

Gly46–Thr53 contributes to the ATP binding site. The interval Glu420–Phe482 is disordered. Basic and acidic residues predominate over residues Lys442–Ala476.

Belongs to the activator 1 small subunits family. RfcL subfamily. In terms of assembly, heteromultimer composed of small subunits (RfcS) and large subunits (RfcL).

Its function is as follows. Part of the RFC clamp loader complex which loads the PCNA sliding clamp onto DNA. This chain is Replication factor C large subunit, found in Methanococcus maripaludis (strain C7 / ATCC BAA-1331).